We begin with the raw amino-acid sequence, 245 residues long: Small ribosomal subunit protein uS2 (245 aa).

This sequence belongs to the universal ribosomal protein uS2 family.

The chain is Small ribosomal subunit protein uS2 from Pseudomonas putida (strain ATCC 47054 / DSM 6125 / CFBP 8728 / NCIMB 11950 / KT2440).